Consider the following 273-residue polypeptide: Dermonecrotic toxin LdSicTox-alphaIB3aiv (273 aa).

Residue histidine 5 is part of the active site. Glutamate 25 and aspartate 27 together coordinate Mg(2+). Histidine 41 serves as the catalytic Nucleophile. Disulfide bonds link cysteine 45–cysteine 51 and cysteine 47–cysteine 190. Position 85 (aspartate 85) interacts with Mg(2+).

This sequence belongs to the arthropod phospholipase D family. Class II subfamily. It depends on Mg(2+) as a cofactor. In terms of tissue distribution, expressed by the venom gland.

Its subcellular location is the secreted. The enzyme catalyses an N-(acyl)-sphingosylphosphocholine = an N-(acyl)-sphingosyl-1,3-cyclic phosphate + choline. The catalysed reaction is an N-(acyl)-sphingosylphosphoethanolamine = an N-(acyl)-sphingosyl-1,3-cyclic phosphate + ethanolamine. It carries out the reaction a 1-acyl-sn-glycero-3-phosphocholine = a 1-acyl-sn-glycero-2,3-cyclic phosphate + choline. It catalyses the reaction a 1-acyl-sn-glycero-3-phosphoethanolamine = a 1-acyl-sn-glycero-2,3-cyclic phosphate + ethanolamine. Functionally, dermonecrotic toxins cleave the phosphodiester linkage between the phosphate and headgroup of certain phospholipids (sphingolipid and lysolipid substrates), forming an alcohol (often choline) and a cyclic phosphate. This toxin acts on sphingomyelin (SM). It may also act on ceramide phosphoethanolamine (CPE), lysophosphatidylcholine (LPC) and lysophosphatidylethanolamine (LPE), but not on lysophosphatidylserine (LPS), and lysophosphatidylglycerol (LPG). It acts by transphosphatidylation, releasing exclusively cyclic phosphate products as second products. Induces dermonecrosis, hemolysis, increased vascular permeability, edema, inflammatory response, and platelet aggregation. The sequence is that of Dermonecrotic toxin LdSicTox-alphaIB3aiv from Loxosceles deserta (Desert recluse spider).